The primary structure comprises 537 residues: CTP synthase (537 aa).

An amidoligase domain region spans residues Met-1–Gly-267. A CTP-binding site is contributed by Ser-15. Residue Ser-15 coordinates UTP. Residue Ser-16–Ile-21 participates in ATP binding. Tyr-56 contributes to the L-glutamine binding site. Asp-73 lines the ATP pocket. Asp-73 and Glu-141 together coordinate Mg(2+). CTP contacts are provided by residues Asp-148–Glu-150, Lys-188–Gln-193, and Lys-224. UTP contacts are provided by residues Lys-188–Gln-193 and Lys-224. Residues Tyr-297–Pro-535 form the Glutamine amidotransferase type-1 domain. Gly-355 contacts L-glutamine. Cys-382 serves as the catalytic Nucleophile; for glutamine hydrolysis. L-glutamine contacts are provided by residues Leu-383–Gln-386, Glu-406, and Arg-463. Active-site residues include His-508 and Glu-510.

Belongs to the CTP synthase family. As to quaternary structure, homotetramer.

It carries out the reaction UTP + L-glutamine + ATP + H2O = CTP + L-glutamate + ADP + phosphate + 2 H(+). The enzyme catalyses L-glutamine + H2O = L-glutamate + NH4(+). The catalysed reaction is UTP + NH4(+) + ATP = CTP + ADP + phosphate + 2 H(+). The protein operates within pyrimidine metabolism; CTP biosynthesis via de novo pathway; CTP from UDP: step 2/2. Its activity is regulated as follows. Allosterically activated by GTP, when glutamine is the substrate; GTP has no effect on the reaction when ammonia is the substrate. The allosteric effector GTP functions by stabilizing the protein conformation that binds the tetrahedral intermediate(s) formed during glutamine hydrolysis. Inhibited by the product CTP, via allosteric rather than competitive inhibition. Functionally, catalyzes the ATP-dependent amination of UTP to CTP with either L-glutamine or ammonia as the source of nitrogen. Regulates intracellular CTP levels through interactions with the four ribonucleotide triphosphates. This is CTP synthase from Coprothermobacter proteolyticus (strain ATCC 35245 / DSM 5265 / OCM 4 / BT).